The following is a 142-amino-acid chain: Transcription antitermination protein NusB (142 aa).

This sequence belongs to the NusB family.

Functionally, involved in transcription antitermination. Required for transcription of ribosomal RNA (rRNA) genes. Binds specifically to the boxA antiterminator sequence of the ribosomal RNA (rrn) operons. This Thermotoga sp. (strain RQ2) protein is Transcription antitermination protein NusB.